Reading from the N-terminus, the 910-residue chain is Protein translocase subunit SecA 1 (910 aa).

ATP is bound by residues Gln-86, 104–108 (GEGKT), and Asp-512. The Zn(2+) site is built by Cys-894, Cys-896, Cys-905, and His-906.

This sequence belongs to the SecA family. As to quaternary structure, monomer and homodimer. Part of the essential Sec protein translocation apparatus which comprises SecA, SecYEG and auxiliary proteins SecDF-YajC and YidC. Requires Zn(2+) as cofactor.

The protein resides in the cell inner membrane. It localises to the cytoplasm. The enzyme catalyses ATP + H2O + cellular proteinSide 1 = ADP + phosphate + cellular proteinSide 2.. Its function is as follows. Part of the Sec protein translocase complex. Interacts with the SecYEG preprotein conducting channel. Has a central role in coupling the hydrolysis of ATP to the transfer of proteins into and across the cell membrane, serving both as a receptor for the preprotein-SecB complex and as an ATP-driven molecular motor driving the stepwise translocation of polypeptide chains across the membrane. In Bordetella avium (strain 197N), this protein is Protein translocase subunit SecA 1.